The primary structure comprises 359 residues: Maleylacetate reductase 2 (359 aa).

This sequence belongs to the iron-containing alcohol dehydrogenase family. In terms of assembly, homodimer.

It carries out the reaction 3-oxoadipate + NAD(+) = maleylacetate + NADH + H(+). It catalyses the reaction 3-oxoadipate + NADP(+) = maleylacetate + NADPH + H(+). It functions in the pathway aromatic compound metabolism; 3-chlorocatechol degradation. Its activity is regulated as follows. Inhibited by p-chloromercuribenzoate and by 3-oxoadipate, and, in a temperature-dependent manner, by manganese. Functionally, plays a major role in the degradation of chloroaromatic compounds by channeling maleylacetate and some of its substituted derivatives into the 3-oxoadipate pathway. This enzyme converts maleylacetate and 2-chloromaleylacetate with similar efficiencies. NADH is preferred to NADPH as the cosubstrate. In Cupriavidus pinatubonensis (strain JMP 134 / LMG 1197) (Cupriavidus necator (strain JMP 134)), this protein is Maleylacetate reductase 2 (tfdFII).